Reading from the N-terminus, the 374-residue chain is N-acetyldiaminopimelate deacetylase (374 aa).

Aspartate 68 is an active-site residue. Glutamate 127 (proton acceptor) is an active-site residue.

It belongs to the peptidase M20A family. N-acetyldiaminopimelate deacetylase subfamily.

The catalysed reaction is N-acetyl-(2S,6S)-2,6-diaminopimelate + H2O = (2S,6S)-2,6-diaminopimelate + acetate. It participates in amino-acid biosynthesis; L-lysine biosynthesis via DAP pathway; LL-2,6-diaminopimelate from (S)-tetrahydrodipicolinate (acetylase route): step 3/3. Its function is as follows. Catalyzes the conversion of N-acetyl-diaminopimelate to diaminopimelate and acetate. The chain is N-acetyldiaminopimelate deacetylase from Shouchella clausii (strain KSM-K16) (Alkalihalobacillus clausii).